The primary structure comprises 365 residues: Saoe class I histocompatibility antigen, C alpha chain (365 aa).

The signal sequence occupies residues 1–24 (MTIMAPRTLLLLLSGALSVTETWA). The alpha-1 stretch occupies residues 25–114 (GSHSMRYFST…LLGYYNQSEA (90 aa)). Topologically, residues 25–308 (GSHSMRYFST…EPPSQPTIPI (284 aa)) are extracellular. The N-linked (GlcNAc...) asparagine glycan is linked to asparagine 110. The interval 115-206 (GFHTIQWMYG…ENGKEMLQRA (92 aa)) is alpha-2. 2 disulfides stabilise this stretch: cysteine 125/cysteine 188 and cysteine 227/cysteine 283. Residues 207–298 (EPPKTHVTHH…GLPEPFTLRW (92 aa)) form an alpha-3 region. The region spanning 209 to 297 (PKTHVTHHPV…EGLPEPFTLR (89 aa)) is the Ig-like C1-type domain. The tract at residues 299 to 308 (EPPSQPTIPI) is connecting peptide. Residues 309–332 (MGIVAILAILGAVVTGAVVAAVMW) form a helical membrane-spanning segment. Residues 333–365 (RKKSSDKKGGSYSQAARSDSAQGSDVSLTACKV) are Cytoplasmic-facing. Positions 337-365 (SDKKGGSYSQAARSDSAQGSDVSLTACKV) are disordered. Over residues 346–359 (QAARSDSAQGSDVS) the composition is skewed to polar residues. A phosphoserine mark is found at serine 356 and serine 359.

The protein belongs to the MHC class I family. As to quaternary structure, heterodimer of an alpha chain and a beta chain (beta-2-microglobulin).

Its subcellular location is the membrane. Functionally, involved in the presentation of foreign antigens to the immune system. This chain is Saoe class I histocompatibility antigen, C alpha chain, found in Saguinus oedipus (Cotton-top tamarin).